The primary structure comprises 366 residues: Agamous-like MADS-box protein AGL36 (366 aa).

The MADS-box domain maps to 1–59 (MKKVKLSLIANERSRKTSFIKRKDGIFKKLHELSTLCGVQACALIYSPFIPVPESWPSR). Residues 86–115 (TYLMERITKAKEQLKNLAAENRELQVRRFM) are a coiled coil.

As to quaternary structure, interacts with AGL62.

It is found in the nucleus. In terms of biological role, probable transcription factor. This is Agamous-like MADS-box protein AGL36 (AGL36) from Arabidopsis thaliana (Mouse-ear cress).